A 323-amino-acid chain; its full sequence is Acetyl-coenzyme A carboxylase carboxyl transferase subunit alpha (323 aa).

Positions 39–293 (RLAGKSQQLT…KRSLAESLRQ (255 aa)) constitute a CoA carboxyltransferase C-terminal domain.

This sequence belongs to the AccA family. As to quaternary structure, acetyl-CoA carboxylase is a heterohexamer composed of biotin carboxyl carrier protein (AccB), biotin carboxylase (AccC) and two subunits each of ACCase subunit alpha (AccA) and ACCase subunit beta (AccD).

It is found in the cytoplasm. It catalyses the reaction N(6)-carboxybiotinyl-L-lysyl-[protein] + acetyl-CoA = N(6)-biotinyl-L-lysyl-[protein] + malonyl-CoA. It functions in the pathway lipid metabolism; malonyl-CoA biosynthesis; malonyl-CoA from acetyl-CoA: step 1/1. Component of the acetyl coenzyme A carboxylase (ACC) complex. First, biotin carboxylase catalyzes the carboxylation of biotin on its carrier protein (BCCP) and then the CO(2) group is transferred by the carboxyltransferase to acetyl-CoA to form malonyl-CoA. The protein is Acetyl-coenzyme A carboxylase carboxyl transferase subunit alpha of Cupriavidus pinatubonensis (strain JMP 134 / LMG 1197) (Cupriavidus necator (strain JMP 134)).